A 145-amino-acid polypeptide reads, in one-letter code: METSEELKQRIGDLSYEVTQHAATESPFTGEYDDFFEKGIYVDIVSGEVLFSSLDKFNSGCGWPAFSKPIENRMVINHDDSSYGMRRVEVKSREAGSHLGHVFSDGPKEAGGLRYCINSAALKFIPYEQMEKEGYAQWLTLFDET.

A MsrB domain is found at 4 to 127 (SEELKQRIGD…NSAALKFIPY (124 aa)). Cys116 acts as the Nucleophile in catalysis.

Belongs to the MsrB Met sulfoxide reductase family.

It catalyses the reaction L-methionyl-[protein] + [thioredoxin]-disulfide + H2O = L-methionyl-(R)-S-oxide-[protein] + [thioredoxin]-dithiol. The polypeptide is Peptide methionine sulfoxide reductase MsrB (Streptococcus pyogenes serotype M6 (strain ATCC BAA-946 / MGAS10394)).